Reading from the N-terminus, the 129-residue chain is MSEAPKRSEKSADYKKAVAKQRRIKKLRKMKIKDRAGDVVVSDISDVEVVGNGDEESQDDWLNDLLKSDGDGGKAGPVDPSHPMETTTTDHSSQNTLASKICAFTYDNSALLGVGIVTVALSIFARLRK.

Residues N52 to Q94 form a disordered region. The segment covering G53–L62 has biased composition (acidic residues). A compositionally biased stretch (polar residues) spans M84–Q94.

This is an uncharacterized protein from Caenorhabditis elegans.